We begin with the raw amino-acid sequence, 512 residues long: Cytoplasmic tRNA 2-thiolation protein 2-A (512 aa).

This sequence belongs to the CTU2/NCS2 family.

Its subcellular location is the cytoplasm. It functions in the pathway tRNA modification; 5-methoxycarbonylmethyl-2-thiouridine-tRNA biosynthesis. Functionally, plays a central role in 2-thiolation of mcm(5)S(2)U at tRNA wobble positions of tRNA(Lys), tRNA(Glu) and tRNA(Gln). May act by forming a heterodimer with ctu1/atpbd3 that ligates sulfur from thiocarboxylated urm1 onto the uridine of tRNAs at wobble position. The polypeptide is Cytoplasmic tRNA 2-thiolation protein 2-A (ctu2-a) (Xenopus laevis (African clawed frog)).